The following is a 457-amino-acid chain: uncharacterized protein (457 aa).

Transmembrane regions (helical) follow at residues 15–35 (YGAI…GAIA), 54–74 (IWVV…FSFL), 87–107 (GLVV…LQML), 112–132 (VIQG…IRLI), 144–164 (INSF…AAIL), 166–186 (IASW…ALLL), 205–225 (LPSA…LSGF), 229–249 (QSLT…IFFI), 269–289 (LFSL…LAMV), 308–328 (LLLT…GYLI), 334–354 (GLLG…LVLL), 357–377 (SPAD…FGLF), 400–420 (MLGT…ALML), and 428–448 (THVS…VSGL).

This sequence belongs to the major facilitator superfamily. TCR/Tet family.

Its subcellular location is the cell inner membrane. This is an uncharacterized protein from Escherichia coli (strain K12).